Reading from the N-terminus, the 136-residue chain is Glutaredoxin-C7 (136 aa).

The 107-residue stretch at 29–135 (LLRIESLASE…PLLKDAGALW (107 aa)) folds into the Glutaredoxin domain. C49 and C52 are joined by a disulfide. Positions 133 to 136 (ALWL) match the Responsive for interaction with TGA factors motif.

The protein belongs to the glutaredoxin family. CC-type subfamily. As to quaternary structure, interacts with TGA2, TGA3, TGA7 and PAN. Interacts with TGA9 and TGA10 in the nucleus. In terms of tissue distribution, highly expressed in inflorescences, roots, and siliques. Expressed at lower levels in mature flowers.

It is found in the cytoplasm. The protein localises to the nucleus. Its function is as follows. Has a glutathione-disulfide oxidoreductase activity in the presence of NADPH and glutathione reductase. Reduces low molecular weight disulfides and proteins. Involved in flower development as a regulator of petal primorida initiation and further petal morphogenesis. May mediate post-translational modifications of target proteins required for normal petal organ initiation and morphogenesis. ROXY1/TGA protein interactions can occur in vivo and support their biological relevance in petal development. May be involved in the regulation of the floral regulator class C gene AG (AGAMOUS). The protein is Glutaredoxin-C7 (GRXC7) of Arabidopsis thaliana (Mouse-ear cress).